The following is a 438-amino-acid chain: Trigger factor (438 aa).

Residues 160–245 (DDKVTIDFVG…VKKIQQAELP (86 aa)) enclose the PPIase FKBP-type domain.

This sequence belongs to the FKBP-type PPIase family. Tig subfamily.

It is found in the cytoplasm. It carries out the reaction [protein]-peptidylproline (omega=180) = [protein]-peptidylproline (omega=0). Its function is as follows. Involved in protein export. Acts as a chaperone by maintaining the newly synthesized protein in an open conformation. Functions as a peptidyl-prolyl cis-trans isomerase. This Francisella tularensis subsp. tularensis (strain FSC 198) protein is Trigger factor.